A 981-amino-acid polypeptide reads, in one-letter code: Serine/threonine-protein kinase D1044.8 (981 aa).

The region spanning 453 to 725 is the Protein kinase domain; sequence YELLDQLGAG…MCGVRLLEYL (273 aa). ATP is bound by residues 459–467 and lysine 488; that span reads LGAGAFGCV. The active-site Proton acceptor is aspartate 591. A compositionally biased stretch (polar residues) spans 735–746; sequence TSDMTASQSSYN. Disordered stretches follow at residues 735 to 802 and 823 to 847; these read TSDM…PSSI and IPSRRRVQTCSTEHPARSSSSTELK. Residues 752–762 show a composition bias toward low complexity; it reads SPSSLNSSTSS. Over residues 830–847 the composition is skewed to polar residues; sequence QTCSTEHPARSSSSTELK.

Belongs to the protein kinase superfamily. NEK Ser/Thr protein kinase family. NIMA subfamily. Mg(2+) is required as a cofactor.

It catalyses the reaction L-seryl-[protein] + ATP = O-phospho-L-seryl-[protein] + ADP + H(+). The catalysed reaction is L-threonyl-[protein] + ATP = O-phospho-L-threonyl-[protein] + ADP + H(+). This chain is Serine/threonine-protein kinase D1044.8 (nekl-4), found in Caenorhabditis elegans.